The primary structure comprises 207 residues: Na(+)-translocating ferredoxin:NAD(+) oxidoreductase complex subunit G (207 aa).

Residues 18-38 (GLILFVISAVAACALALTNYV) form a helical membrane-spanning segment. An FMN phosphoryl threonine modification is found at Thr-185.

Belongs to the RnfG family. The complex is composed of six subunits: RnfA, RnfB, RnfC, RnfD, RnfE and RnfG. FMN is required as a cofactor.

The protein resides in the cell membrane. The catalysed reaction is 2 reduced [2Fe-2S]-[ferredoxin] + Na(+)(in) + NAD(+) + H(+) = 2 oxidized [2Fe-2S]-[ferredoxin] + Na(+)(out) + NADH. In terms of biological role, part of a membrane-bound complex that couples electron transfer with translocation of ions across the membrane. Couples electron transfer from reduced ferredoxin to NAD(+) with electrogenic movement of Na(+) out of the cell. Involved in caffeate respiration. The chain is Na(+)-translocating ferredoxin:NAD(+) oxidoreductase complex subunit G from Acetobacterium woodii (strain ATCC 29683 / DSM 1030 / JCM 2381 / KCTC 1655 / WB1).